Reading from the N-terminus, the 580-residue chain is MFS-type transporter thnB (580 aa).

The disordered stretch occupies residues 1–33; the sequence is MSGDYSATRKSENVDTSTTASQEDSSLAPEQPE. Polar residues predominate over residues 14 to 25; it reads VDTSTTASQEDS. 7 helical membrane-spanning segments follow: residues 60 to 80, 92 to 112, 125 to 145, 157 to 177, 188 to 208, 216 to 236, and 259 to 279; these read LITL…DQTI, FHGL…LGGF, LKIS…ICGV, AIAG…LAFS, STMG…GGAF, WCFY…FLFF, and VGTV…QYAG. Asparagine 285 carries N-linked (GlcNAc...) asparagine glycosylation. The next 7 membrane-spanning stretches (helical) occupy residues 286–306, 331–351, 364–384, 389–409, 421–441, 457–477, and 529–549; these read SSVV…LAAW, IFQF…PIYF, VDNL…GAAV, MATP…GLLY, IGYQ…ALNI, SLYF…QAAF, and FAVS…MVMI.

It belongs to the major facilitator superfamily.

It is found in the membrane. In terms of biological role, MFS-type transporter; part of the gene cluster that produces the tetronate natural products trihazones. The protein is MFS-type transporter thnB of Trichoderma harzianum (Hypocrea lixii).